We begin with the raw amino-acid sequence, 117 residues long: Large ribosomal subunit protein bL20 (117 aa).

It belongs to the bacterial ribosomal protein bL20 family.

Functionally, binds directly to 23S ribosomal RNA and is necessary for the in vitro assembly process of the 50S ribosomal subunit. It is not involved in the protein synthesizing functions of that subunit. In Brachyspira hyodysenteriae (strain ATCC 49526 / WA1), this protein is Large ribosomal subunit protein bL20.